The chain runs to 226 residues: Ribonuclease 3 (226 aa).

Residues 6–128 (VNQLQKKLGY…LIGAIFLDSD (123 aa)) form the RNase III domain. E41 lines the Mg(2+) pocket. Residue D45 is part of the active site. Residues D114 and E117 each contribute to the Mg(2+) site. E117 is a catalytic residue. The DRBM domain occupies 155 to 225 (DPKTRLQEYL…AEQALIQLEL (71 aa)).

Belongs to the ribonuclease III family. In terms of assembly, homodimer. Requires Mg(2+) as cofactor.

Its subcellular location is the cytoplasm. It carries out the reaction Endonucleolytic cleavage to 5'-phosphomonoester.. In terms of biological role, digests double-stranded RNA. Involved in the processing of primary rRNA transcript to yield the immediate precursors to the large and small rRNAs (23S and 16S). Processes some mRNAs, and tRNAs when they are encoded in the rRNA operon. Processes pre-crRNA and tracrRNA of type II CRISPR loci if present in the organism. The protein is Ribonuclease 3 of Proteus mirabilis (strain HI4320).